Consider the following 952-residue polypeptide: Disintegrin and metalloproteinase domain-containing protein adm-2 (952 aa).

Topologically, residues 1–672 (MTDTLDLKLS…NEAYRFRGIT (672 aa)) are extracellular. Asparagine 125 and asparagine 301 each carry an N-linked (GlcNAc...) asparagine glycan. The 197-residue stretch at 177 to 373 (RFVELALVAD…GIDLCLFNEP (197 aa)) folds into the Peptidase M12B domain. 3 cysteine pairs are disulfide-bonded: cysteine 287–cysteine 368, cysteine 330–cysteine 352, and cysteine 332–cysteine 337. Histidine 312 serves as a coordination point for Zn(2+). The active site involves glutamate 313. The Zn(2+) site is built by histidine 316 and histidine 322. The region spanning 379 to 466 (DAKCGNGIVE…DCPADFFVQN (88 aa)) is the Disintegrin domain. N-linked (GlcNAc...) asparagine glycosylation is present at asparagine 406. Cystine bridges form between cysteine 438-cysteine 458, cysteine 624-cysteine 634, cysteine 628-cysteine 640, and cysteine 642-cysteine 651. The EGF-like domain maps to 620–652 (VTAQCLDNCNFRGVCNNVGNCHCERGFGGIACE). Residues 673–693 (LSSTFLVFFCLFGIFIGGLCV) traverse the membrane as a helical segment. Over 694–952 (YYRVKRKRNL…AAIFDQKLKK (259 aa)) the chain is Cytoplasmic. Disordered regions lie at residues 778 to 809 (IPMV…ERAT) and 829 to 938 (SFNT…EKVD). Composition is skewed to basic and acidic residues over residues 798-809 (AEKEEQNQERAT) and 849-873 (PSDD…DRLN). Pro residues predominate over residues 905–914 (QAPPPPPPAH). A compositionally biased stretch (basic and acidic residues) spans 925–938 (KVSEDAAATEEKVD).

The cofactor is Zn(2+). Expressed in hyp7 large epidermal syncytium (punctate distribution), seam cell syncytia, anterior epidermis, neurons located in the head, tail and central body, proximal oogenic cells (levels increasing in maturing oocytes) and myoepithelial cells of the spermatheca (at protein level). Not detected in mature sperm cells.

The protein resides in the cell membrane. Its subcellular location is the endosome membrane. It is found in the lysosome membrane. Functionally, metalloprotease that cleaves and releases a number of molecules. Negative regulator of lrp-1 protein levels, potentially by influencing its endosomal trafficking. Involved in regulating the molting process. In Caenorhabditis elegans, this protein is Disintegrin and metalloproteinase domain-containing protein adm-2.